A 307-amino-acid chain; its full sequence is tRNA dimethylallyltransferase (307 aa).

Position 9 to 16 (9 to 16 (GPTAVGKT)) interacts with ATP. Position 11-16 (11-16 (TAVGKT)) interacts with substrate. Positions 34-37 (DSMQ) are interaction with substrate tRNA.

Belongs to the IPP transferase family. Monomer. Requires Mg(2+) as cofactor.

The enzyme catalyses adenosine(37) in tRNA + dimethylallyl diphosphate = N(6)-dimethylallyladenosine(37) in tRNA + diphosphate. Functionally, catalyzes the transfer of a dimethylallyl group onto the adenine at position 37 in tRNAs that read codons beginning with uridine, leading to the formation of N6-(dimethylallyl)adenosine (i(6)A). This Levilactobacillus brevis (strain ATCC 367 / BCRC 12310 / CIP 105137 / JCM 1170 / LMG 11437 / NCIMB 947 / NCTC 947) (Lactobacillus brevis) protein is tRNA dimethylallyltransferase.